The following is a 101-amino-acid chain: Acylphosphatase (101 aa).

The Acylphosphatase-like domain occupies 12-98; sequence RAHVFVTGRV…EGLRGFEVKR (87 aa). Catalysis depends on residues Arg-27 and Asn-45.

This sequence belongs to the acylphosphatase family.

It carries out the reaction an acyl phosphate + H2O = a carboxylate + phosphate + H(+). The polypeptide is Acylphosphatase (acyP) (Nostoc sp. (strain PCC 7120 / SAG 25.82 / UTEX 2576)).